The following is a 103-amino-acid chain: Large ribosomal subunit protein uL24 (103 aa).

This sequence belongs to the universal ribosomal protein uL24 family. As to quaternary structure, part of the 50S ribosomal subunit.

One of two assembly initiator proteins, it binds directly to the 5'-end of the 23S rRNA, where it nucleates assembly of the 50S subunit. In terms of biological role, one of the proteins that surrounds the polypeptide exit tunnel on the outside of the subunit. This chain is Large ribosomal subunit protein uL24, found in Alkaliphilus metalliredigens (strain QYMF).